We begin with the raw amino-acid sequence, 267 residues long: Hydroxyethylthiazole kinase (267 aa).

Met-48 is a binding site for substrate. Residues Arg-124 and Ser-170 each coordinate ATP. Gly-197 is a substrate binding site.

The protein belongs to the Thz kinase family. Mg(2+) is required as a cofactor.

It catalyses the reaction 5-(2-hydroxyethyl)-4-methylthiazole + ATP = 4-methyl-5-(2-phosphooxyethyl)-thiazole + ADP + H(+). It participates in cofactor biosynthesis; thiamine diphosphate biosynthesis; 4-methyl-5-(2-phosphoethyl)-thiazole from 5-(2-hydroxyethyl)-4-methylthiazole: step 1/1. Functionally, catalyzes the phosphorylation of the hydroxyl group of 4-methyl-5-beta-hydroxyethylthiazole (THZ). The protein is Hydroxyethylthiazole kinase of Aliivibrio fischeri (strain ATCC 700601 / ES114) (Vibrio fischeri).